The following is a 203-amino-acid chain: Histidine biosynthesis bifunctional protein HisIE (203 aa).

Positions 1-114 (MLTEQQRREL…FGDTAHQWLF (114 aa)) are phosphoribosyl-AMP cyclohydrolase. The segment at 115 to 203 (LYQLEQLLAE…VIENLRKRHQ (89 aa)) is phosphoribosyl-ATP pyrophosphohydrolase.

The protein in the N-terminal section; belongs to the PRA-CH family. It in the C-terminal section; belongs to the PRA-PH family.

It is found in the cytoplasm. It carries out the reaction 1-(5-phospho-beta-D-ribosyl)-ATP + H2O = 1-(5-phospho-beta-D-ribosyl)-5'-AMP + diphosphate + H(+). The catalysed reaction is 1-(5-phospho-beta-D-ribosyl)-5'-AMP + H2O = 1-(5-phospho-beta-D-ribosyl)-5-[(5-phospho-beta-D-ribosylamino)methylideneamino]imidazole-4-carboxamide. It participates in amino-acid biosynthesis; L-histidine biosynthesis; L-histidine from 5-phospho-alpha-D-ribose 1-diphosphate: step 2/9. Its pathway is amino-acid biosynthesis; L-histidine biosynthesis; L-histidine from 5-phospho-alpha-D-ribose 1-diphosphate: step 3/9. This is Histidine biosynthesis bifunctional protein HisIE from Escherichia coli O6:H1 (strain CFT073 / ATCC 700928 / UPEC).